The following is a 701-amino-acid chain: MADLLFEIGAEEIPAGFVPGALRQLEDDLAKALADARLAHGEVRAVGTPRRLAVWARDVAPKQTDARTEAFGPPVAQAYDAEGKPTPAATGFARSQGVEVSALVRAQTPKGERVAVTKVEKGRKAEQVLPALLERLVAGLRFRKAMRSRFDEVTFARPVRWMVALLGGRPLKVRHGEVASGKVTYGHRFLAPKAIALKGTPDDYLAKLRRAHVLADPEERRAALLAELARAGKEAGGKVRDDPALVEQVLYLVEEPSAVVGEFERSNLELPPEVVISEMRNHQRYFAVVDGKGRLKNRFVAVSATRVKDPAVARHGYERVLRARLADARFFFEEDRKRKLHERIEDLGRRTFQAKLGSELDRAQRIGAVASGLARALGKDALVADLLEASRLAKVDLNTGMVGEFPELQGTMGAHYARLEGLKPEIADAIEDHYKPIGAAEEMPRSDLGALVAVADRLHSLVGIIGVGEKATGAADPFGLRRAAIGILRIVIARGYHLSLATAVEQTLDALAGVKLAAGRALVAEQVLDFLRGRVRAAWTERFDADLVEAVLAAGSDDVVDARRRLEALAEAKARPDFGSLAVAFKRVANIQEKAGGPGAAAVDPALLRDPAEQDLLAALEKVEQEVGARRAARDYPAVLRTVATLEPAVARFFDDVLVMAEDPALRANRLGLMRRVGALFSDLADFRKIQAEAPAQARAG.

This sequence belongs to the class-II aminoacyl-tRNA synthetase family. As to quaternary structure, tetramer of two alpha and two beta subunits.

It is found in the cytoplasm. It catalyses the reaction tRNA(Gly) + glycine + ATP = glycyl-tRNA(Gly) + AMP + diphosphate. This Anaeromyxobacter dehalogenans (strain 2CP-C) protein is Glycine--tRNA ligase beta subunit.